Here is a 556-residue protein sequence, read N- to C-terminus: Urocanate hydratase (556 aa).

NAD(+)-binding positions include glycine 52–glycine 53, glutamine 130, glycine 176–glycine 178, glutamate 196, arginine 201, asparagine 242–alanine 243, glutamine 263–histidine 267, tyrosine 273–leucine 274, and tyrosine 322. The active site involves cysteine 410. Glycine 492 is a binding site for NAD(+).

The protein belongs to the urocanase family. NAD(+) serves as cofactor.

The protein localises to the cytoplasm. It catalyses the reaction 4-imidazolone-5-propanoate = trans-urocanate + H2O. It functions in the pathway amino-acid degradation; L-histidine degradation into L-glutamate; N-formimidoyl-L-glutamate from L-histidine: step 2/3. Its function is as follows. Catalyzes the conversion of urocanate to 4-imidazolone-5-propionate. In Bradyrhizobium sp. (strain ORS 278), this protein is Urocanate hydratase.